The sequence spans 338 residues: MIELHQVSKSFNVNGKTVEAVKNVSITVEKGEIFGVVGYSGAGKSTLVRCINLLERPDAGQVLIDGKNLSTLSSKELRVARRKIGMIFQGYNLLKTATVYDNIAKPLKLEGVPKDEIEIRVNKYLSIVGLEDKRNNYPSQLSGGQKQRVAIARALAHEPEILLSDEATSALDPETTEAILQLLLKINAELGITIFLITHELDVIQRICDRVAVMENGHLVEQGTVLDIFTKAKHATTKRFVGSEASFDIPQDLLEKYIATGKLVSLHFIGDEADEPALALVSRKFDVLPSILAGGIDHLKNGTLGKLLVHLKGDEAEYSKAIAYLKESGVVVEEVELL.

The region spanning 2–241 is the ABC transporter domain; sequence IELHQVSKSF…AKHATTKRFV (240 aa). 38-45 provides a ligand contact to ATP; that stretch reads GYSGAGKS.

The protein belongs to the ABC transporter superfamily. Methionine importer (TC 3.A.1.24) family. In terms of assembly, the complex is composed of two ATP-binding proteins (MetN), two transmembrane proteins (MetI) and a solute-binding protein (MetQ).

It localises to the cell membrane. It carries out the reaction L-methionine(out) + ATP + H2O = L-methionine(in) + ADP + phosphate + H(+). The catalysed reaction is D-methionine(out) + ATP + H2O = D-methionine(in) + ADP + phosphate + H(+). Part of the ABC transporter complex MetNIQ involved in methionine import. Responsible for energy coupling to the transport system. The chain is Methionine import ATP-binding protein MetN 1 from Listeria innocua serovar 6a (strain ATCC BAA-680 / CLIP 11262).